Consider the following 280-residue polypeptide: 4-hydroxy-3-methylbut-2-enyl diphosphate reductase (280 aa).

Position 12 (cysteine 12) interacts with [4Fe-4S] cluster. (2E)-4-hydroxy-3-methylbut-2-enyl diphosphate contacts are provided by histidine 40 and histidine 72. Histidine 40 and histidine 72 together coordinate dimethylallyl diphosphate. Isopentenyl diphosphate is bound by residues histidine 40 and histidine 72. Position 94 (cysteine 94) interacts with [4Fe-4S] cluster. (2E)-4-hydroxy-3-methylbut-2-enyl diphosphate is bound at residue histidine 122. Position 122 (histidine 122) interacts with dimethylallyl diphosphate. Position 122 (histidine 122) interacts with isopentenyl diphosphate. The active-site Proton donor is glutamate 124. Residue threonine 160 coordinates (2E)-4-hydroxy-3-methylbut-2-enyl diphosphate. Residue cysteine 188 participates in [4Fe-4S] cluster binding. (2E)-4-hydroxy-3-methylbut-2-enyl diphosphate is bound by residues serine 216, asparagine 218, and serine 260. Residues serine 216, asparagine 218, and serine 260 each contribute to the dimethylallyl diphosphate site. Residues serine 216, asparagine 218, and serine 260 each contribute to the isopentenyl diphosphate site.

This sequence belongs to the IspH family. It depends on [4Fe-4S] cluster as a cofactor.

The enzyme catalyses isopentenyl diphosphate + 2 oxidized [2Fe-2S]-[ferredoxin] + H2O = (2E)-4-hydroxy-3-methylbut-2-enyl diphosphate + 2 reduced [2Fe-2S]-[ferredoxin] + 2 H(+). It carries out the reaction dimethylallyl diphosphate + 2 oxidized [2Fe-2S]-[ferredoxin] + H2O = (2E)-4-hydroxy-3-methylbut-2-enyl diphosphate + 2 reduced [2Fe-2S]-[ferredoxin] + 2 H(+). The protein operates within isoprenoid biosynthesis; dimethylallyl diphosphate biosynthesis; dimethylallyl diphosphate from (2E)-4-hydroxy-3-methylbutenyl diphosphate: step 1/1. It functions in the pathway isoprenoid biosynthesis; isopentenyl diphosphate biosynthesis via DXP pathway; isopentenyl diphosphate from 1-deoxy-D-xylulose 5-phosphate: step 6/6. Its function is as follows. Catalyzes the conversion of 1-hydroxy-2-methyl-2-(E)-butenyl 4-diphosphate (HMBPP) into a mixture of isopentenyl diphosphate (IPP) and dimethylallyl diphosphate (DMAPP). Acts in the terminal step of the DOXP/MEP pathway for isoprenoid precursor biosynthesis. This is 4-hydroxy-3-methylbut-2-enyl diphosphate reductase from Pelobacter propionicus (strain DSM 2379 / NBRC 103807 / OttBd1).